A 221-amino-acid polypeptide reads, in one-letter code: Ribosomal RNA large subunit methyltransferase E (221 aa).

5 residues coordinate S-adenosyl-L-methionine: Gly-60, Trp-62, Asp-89, Asp-105, and Asp-134. Lys-174 serves as the catalytic Proton acceptor. Positions 199–221 are disordered; it reads KPKASRDKSSETFLLGRQLKHPG.

The protein belongs to the class I-like SAM-binding methyltransferase superfamily. RNA methyltransferase RlmE family.

It localises to the cytoplasm. The enzyme catalyses uridine(2552) in 23S rRNA + S-adenosyl-L-methionine = 2'-O-methyluridine(2552) in 23S rRNA + S-adenosyl-L-homocysteine + H(+). Its function is as follows. Specifically methylates the uridine in position 2552 of 23S rRNA at the 2'-O position of the ribose in the fully assembled 50S ribosomal subunit. The polypeptide is Ribosomal RNA large subunit methyltransferase E (Ralstonia nicotianae (strain ATCC BAA-1114 / GMI1000) (Ralstonia solanacearum)).